The following is a 754-amino-acid chain: Lysophospholipase 3 (754 aa).

An N-terminal signal peptide occupies residues 1-19; that stretch reads MKVNLKLIIGSILISQAQA. Low complexity-rich tracts occupy residues 25–40 and 50–88; these read SSGSSSSSDSSPSETG and LFGSGSSLTQSSSAQASSTKSTSDSASSTDSSLFSSSNS. The segment at 25–88 is disordered; sequence SSGSSSSSDS…DSSLFSSSNS (64 aa). N-linked (GlcNAc...) asparagine glycans are attached at residues Asn-112, Asn-156, Asn-174, Asn-317, Asn-325, Asn-354, Asn-391, Asn-423, Asn-470, Asn-510, Asn-515, Asn-560, Asn-577, Asn-597, Asn-625, and Asn-631. A PLA2c domain is found at 114 to 670; that stretch reads TCPSKKTFIR…QEYCWTGGFK (557 aa). Low complexity predominate over residues 687–721; the sequence is KTHTSGGTSSTTQQTSTTTGSSANGGSSSTGSSSS. Positions 687-727 are disordered; it reads KTHTSGGTSSTTQQTSTTTGSSANGGSSSTGSSSSSKKKNG.

Belongs to the lysophospholipase family.

It is found in the secreted. The enzyme catalyses a 1-acyl-sn-glycero-3-phosphocholine + H2O = sn-glycerol 3-phosphocholine + a fatty acid + H(+). Catalyzes the release of fatty acids from lysophospholipids. Phospholipase B may well contribute to pathogenicity by abetting the fungus in damaging and traversing host cell membranes, processes which likely increase the rapidity of disseminated infection. The protein is Lysophospholipase 3 (PLB3) of Candida albicans (Yeast).